Reading from the N-terminus, the 90-residue chain is Small ribosomal subunit protein uS15 (90 aa).

Belongs to the universal ribosomal protein uS15 family. Part of the 30S ribosomal subunit. Forms a bridge to the 50S subunit in the 70S ribosome, contacting the 23S rRNA.

Its function is as follows. One of the primary rRNA binding proteins, it binds directly to 16S rRNA where it helps nucleate assembly of the platform of the 30S subunit by binding and bridging several RNA helices of the 16S rRNA. Forms an intersubunit bridge (bridge B4) with the 23S rRNA of the 50S subunit in the ribosome. The chain is Small ribosomal subunit protein uS15 from Helicobacter acinonychis (strain Sheeba).